The sequence spans 330 residues: DNA-directed RNA polymerase subunit alpha (330 aa).

Residues 1–235 (MQGSVTEFLK…EQLEAFVDLR (235 aa)) are alpha N-terminal domain (alpha-NTD). An alpha C-terminal domain (alpha-CTD) region spans residues 249-330 (FDPILLRPVD…WPPASIADNE (82 aa)).

Belongs to the RNA polymerase alpha chain family. In terms of assembly, homodimer. The RNAP catalytic core consists of 2 alpha, 1 beta, 1 beta' and 1 omega subunit. When a sigma factor is associated with the core the holoenzyme is formed, which can initiate transcription.

The enzyme catalyses RNA(n) + a ribonucleoside 5'-triphosphate = RNA(n+1) + diphosphate. Functionally, DNA-dependent RNA polymerase catalyzes the transcription of DNA into RNA using the four ribonucleoside triphosphates as substrates. In Yersinia enterocolitica serotype O:8 / biotype 1B (strain NCTC 13174 / 8081), this protein is DNA-directed RNA polymerase subunit alpha.